The primary structure comprises 339 residues: Ornithine utilization regulator (339 aa).

Positions 241–338 (TRVRRLLLAR…GKLPSDYREA (98 aa)) constitute an HTH araC/xylS-type domain. DNA-binding regions (H-T-H motif) lie at residues 258 to 279 (EQAARELHTSGRSLRRHLSSLG) and 305 to 328 (LYEIALLLGFNDSSNFRRAFRKWT).

In terms of biological role, probably activates the ArgJ gene that encodes ornithine acetyltransferase. Binds to its own promoter-operator region. Probably binds ornithine. The protein is Ornithine utilization regulator (oruR) of Pseudomonas aeruginosa (strain ATCC 15692 / DSM 22644 / CIP 104116 / JCM 14847 / LMG 12228 / 1C / PRS 101 / PAO1).